A 322-amino-acid chain; its full sequence is GTP 3',8-cyclase (322 aa).

The Radical SAM core domain maps to 4–229 (NFNRNIDYLR…IPVQMKKSGP (226 aa)). R13 contacts GTP. Positions 20 and 24 each coordinate [4Fe-4S] cluster. Y26 contacts S-adenosyl-L-methionine. [4Fe-4S] cluster is bound at residue C27. Residue R64 coordinates GTP. G68 contributes to the S-adenosyl-L-methionine binding site. T95 is a GTP binding site. Residue S119 participates in S-adenosyl-L-methionine binding. K156 contributes to the GTP binding site. Position 190 (M190) interacts with S-adenosyl-L-methionine. Residues C253 and C256 each contribute to the [4Fe-4S] cluster site. 258–260 (RLR) provides a ligand contact to GTP. C270 serves as a coordination point for [4Fe-4S] cluster.

The protein belongs to the radical SAM superfamily. MoaA family. Monomer and homodimer. It depends on [4Fe-4S] cluster as a cofactor.

It catalyses the reaction GTP + AH2 + S-adenosyl-L-methionine = (8S)-3',8-cyclo-7,8-dihydroguanosine 5'-triphosphate + 5'-deoxyadenosine + L-methionine + A + H(+). It participates in cofactor biosynthesis; molybdopterin biosynthesis. Its function is as follows. Catalyzes the cyclization of GTP to (8S)-3',8-cyclo-7,8-dihydroguanosine 5'-triphosphate. The polypeptide is GTP 3',8-cyclase (Thermodesulfovibrio yellowstonii (strain ATCC 51303 / DSM 11347 / YP87)).